Reading from the N-terminus, the 599-residue chain is MGSSKFKRAIGAVKDQTSVGLAKVNGRSASLSELDVAIVKATRHEEFPAEEKYIREILSLTSYSRSYINACVSTLSRRLNKTKCWTVALKTLILIQRLLGEGDQAYEQEIFFATRRGTRLLNMSDFRDVSRSNSWDYSAFVRTYALYLDERLDFRMQARHGKRGVYCVGGEADEEEQDQAAADLSTAIVVRSQPIAEMKTEQIFIRIQHLQQLLDRFLACRPTGNARNNRVVIVALYPIVKESFQIYYDVTEIMGILIERFMELDIPDSIKVYDIFCRVSKQFEELDQFYSWCKNMGIARSSEYPEIEKITQKKLDLMDEFIRDKSALEHTKQSKSVKSEADEDDDEARTEEVNEEQEDMNAIKALPEPPPKEEDDVKPEEEAKEEVIIEKKQEEMGDLLDLGNTNGGEAGQAGDSLALALFDGPYASGSGSESGPGWEAFKDDSADWETALVQTATNLSGQKSELGGGFDMLLLNGMYQHGAVNAAVKTSTAYGASGSASSMAFGSAGRPAATMLALPAPSTANGNAGNINSPVPMDPFAASLEVAPPAYVQMNDMEKKQRMLMEEQMMWDQYSRDGRQGHMNLRQNQNQPYSYTPQY.

The region spanning 26–162 is the ENTH domain; the sequence is GRSASLSELD…DFRMQARHGK (137 aa). 2 disordered regions span residues 332–382 and 580–599; these read KQSK…PEEE and QGHM…TPQY. Composition is skewed to acidic residues over residues 341 to 359 and 373 to 382; these read ADED…EQED and EEDDVKPEEE. Residues 585–599 are compositionally biased toward polar residues; sequence LRQNQNQPYSYTPQY.

The protein resides in the membrane. Its subcellular location is the clathrin-coated pit. It localises to the golgi apparatus. The protein localises to the cytoplasmic vesicle. It is found in the clathrin-coated vesicle. This is Putative clathrin assembly protein At1g03050 from Arabidopsis thaliana (Mouse-ear cress).